We begin with the raw amino-acid sequence, 236 residues long: Eukaryotic translation initiation factor 3 subunit K (236 aa).

One can recognise a PCI domain in the interval 42-222; that stretch reads YDKDILVTTL…TIKSRNIEEK (181 aa).

This sequence belongs to the eIF-3 subunit K family. As to quaternary structure, component of the eukaryotic translation initiation factor 3 (eIF-3) complex.

It localises to the cytoplasm. Component of the eukaryotic translation initiation factor 3 (eIF-3) complex, which is involved in protein synthesis of a specialized repertoire of mRNAs and, together with other initiation factors, stimulates binding of mRNA and methionyl-tRNAi to the 40S ribosome. The eIF-3 complex specifically targets and initiates translation of a subset of mRNAs involved in cell proliferation. This Brugia malayi (Filarial nematode worm) protein is Eukaryotic translation initiation factor 3 subunit K.